A 210-amino-acid polypeptide reads, in one-letter code: Ribosomal RNA large subunit methyltransferase E (210 aa).

Residues G67, W69, D87, D103, and D128 each contribute to the S-adenosyl-L-methionine site. K168 serves as the catalytic Proton acceptor.

This sequence belongs to the class I-like SAM-binding methyltransferase superfamily. RNA methyltransferase RlmE family.

The protein resides in the cytoplasm. The enzyme catalyses uridine(2552) in 23S rRNA + S-adenosyl-L-methionine = 2'-O-methyluridine(2552) in 23S rRNA + S-adenosyl-L-homocysteine + H(+). Its function is as follows. Specifically methylates the uridine in position 2552 of 23S rRNA at the 2'-O position of the ribose in the fully assembled 50S ribosomal subunit. This is Ribosomal RNA large subunit methyltransferase E from Psychrobacter sp. (strain PRwf-1).